Reading from the N-terminus, the 204-residue chain is Probable UbiX-like flavin prenyltransferase (204 aa).

Residues 21–23 (GAT), Ser-47, 98–101 (SMKS), and Arg-133 each bind FMN.

Belongs to the UbiX/PAD1 family. YclB subfamily. Homododecamer.

The catalysed reaction is dimethylallyl phosphate + FMNH2 = prenylated FMNH2 + phosphate. Its function is as follows. Involved in the non-oxidative decarboxylation and detoxification of phenolic derivatives under both aerobic and anaerobic conditions. Flavin prenyltransferase that catalyzes the synthesis of the prenylated FMN cofactor (prenyl-FMN) for phenolic acid decarboxylase. The polypeptide is Probable UbiX-like flavin prenyltransferase (Bacillus subtilis (strain 168)).